Here is a 533-residue protein sequence, read N- to C-terminus: Probable protein kinase UbiB (533 aa).

The helical transmembrane segment at 24-44 (LILELPMLPWWLRLLGATLPW) threads the bilayer. The 369-residue stretch at 126–494 (RFEREPLASA…WKGSRHDWLG (369 aa)) folds into the Protein kinase domain. ATP contacts are provided by residues 132–140 (LASASVAQV) and lysine 154. Aspartate 289 functions as the Proton acceptor in the catalytic mechanism. The chain crosses the membrane as a helical span at residues 510–530 (LGQQLEAWPAWVMLAGGVFLI).

It belongs to the ABC1 family. UbiB subfamily.

The protein localises to the cell inner membrane. It functions in the pathway cofactor biosynthesis; ubiquinone biosynthesis [regulation]. In terms of biological role, is probably a protein kinase regulator of UbiI activity which is involved in aerobic coenzyme Q (ubiquinone) biosynthesis. The polypeptide is Probable protein kinase UbiB (Pseudomonas aeruginosa (strain ATCC 15692 / DSM 22644 / CIP 104116 / JCM 14847 / LMG 12228 / 1C / PRS 101 / PAO1)).